Consider the following 504-residue polypeptide: Protein anon-37Cs (504 aa).

In terms of tissue distribution, low levels seen in adult heads, thorax, abdomen and ovaries, high levels in testes.

Its subcellular location is the cytoplasm. Functionally, has a non-vital function. This is Protein anon-37Cs (anon-37Cs) from Drosophila melanogaster (Fruit fly).